We begin with the raw amino-acid sequence, 473 residues long: Probable aspartokinase (473 aa).

ACT domains follow at residues 323 to 392 and 409 to 473; these read IFGA…FLNN and VVGA…KTNS.

Belongs to the aspartokinase family.

The catalysed reaction is L-aspartate + ATP = 4-phospho-L-aspartate + ADP. The protein operates within amino-acid biosynthesis; L-lysine biosynthesis via DAP pathway; (S)-tetrahydrodipicolinate from L-aspartate: step 1/4. It functions in the pathway amino-acid biosynthesis; L-methionine biosynthesis via de novo pathway; L-homoserine from L-aspartate: step 1/3. Its pathway is amino-acid biosynthesis; L-threonine biosynthesis; L-threonine from L-aspartate: step 1/5. This Methanocaldococcus jannaschii (strain ATCC 43067 / DSM 2661 / JAL-1 / JCM 10045 / NBRC 100440) (Methanococcus jannaschii) protein is Probable aspartokinase.